Here is a 132-residue protein sequence, read N- to C-terminus: uncharacterized protein (132 aa).

Residues 105 to 125 (VHGYVVFWLSILCILIIIFVY) form a helical membrane-spanning segment.

It localises to the membrane. This is an uncharacterized protein from Methanocaldococcus jannaschii (strain ATCC 43067 / DSM 2661 / JAL-1 / JCM 10045 / NBRC 100440) (Methanococcus jannaschii).